Reading from the N-terminus, the 408-residue chain is Multidrug resistance protein MdtG (408 aa).

10 consecutive transmembrane segments (helical) span residues 16 to 36 (LIVA…VMPF), 58 to 78 (IVFS…GGLA), 92 to 112 (LGMG…QFLI), 115 to 135 (ALLG…ATQV), 146 to 166 (TLST…GLLA), 173 to 193 (PVFF…LFCI), 221 to 241 (ILSL…IAPI), 256 to 276 (VAFI…LSAP), 290 to 310 (ILIT…YVQT), and 378 to 398 (AVFL…WNSL).

Belongs to the major facilitator superfamily. DHA1 family. MdtG (TC 2.A.1.2.20) subfamily.

It is found in the cell inner membrane. Functionally, confers resistance to fosfomycin and deoxycholate. The protein is Multidrug resistance protein MdtG of Escherichia coli (strain SMS-3-5 / SECEC).